A 413-amino-acid chain; its full sequence is Divalent metal cation transporter MntH (413 aa).

Helical transmembrane passes span 19-39, 49-69, 94-114, 122-142, 155-175, 196-216, 240-260, 287-307, 323-343, 349-369, and 393-413; these read FALM…GNFA, GYQL…IQLM, VWFY…AEFI, LVFG…TFLI, LVIG…LFFS, AVLL…IYLH, VAIA…TAAA, AAAL…TVVG, IPLL…ILAG, ILVM…IPLL, and LIVV…ALNL.

The protein belongs to the NRAMP family.

Its subcellular location is the cell inner membrane. Its function is as follows. H(+)-stimulated, divalent metal cation uptake system. The polypeptide is Divalent metal cation transporter MntH (Erwinia tasmaniensis (strain DSM 17950 / CFBP 7177 / CIP 109463 / NCPPB 4357 / Et1/99)).